Consider the following 67-residue polypeptide: Envelope small membrane protein (67 aa).

Gly-2 carries N-myristoyl glycine; by host lipidation. An endoplasmic reticulum retention signal region spans residues 2-15 (GLVWSLISNSIQTI). The Virion surface segment spans residues 2 to 27 (GLVWSLISNSIQTIIADFAISVIDAA). A helical membrane pass occupies residues 28-48 (LFFLMLLALAVVTVFLFWLIV). The Intravirion segment spans residues 49–67 (AIGRSLVARCSRGARYRPV).

This sequence belongs to the arteriviridae E protein family. Homomultimer. Associates with itself into higher-order structures, including dimers, trimers and tetramers. Associates with the GP2b-GP3-GP4 complex. Myristoylated. In terms of processing, not glycosylated.

The protein resides in the virion membrane. It is found in the host endoplasmic reticulum membrane. It localises to the host Golgi apparatus membrane. The protein localises to the secreted. In terms of biological role, minor envelope protein. May function as a viroporin in the virion envelope that facilitates uncoating of the virus in order to release the genomic RNA into the cytoplasm for subsequent replication. This is Envelope small membrane protein (GP2a) from Equidae (horses).